Consider the following 379-residue polypeptide: Queuine tRNA-ribosyltransferase (379 aa).

Residue Asp-94 is the Proton acceptor of the active site. Substrate-binding positions include 94-98, Asp-148, Gln-191, and Gly-218; that span reads DSGGF. The segment at 249–255 is RNA binding; sequence GVGSPDS. Asp-268 acts as the Nucleophile in catalysis. The interval 273–277 is RNA binding; important for wobble base 34 recognition; the sequence is TRIAR. Zn(2+) contacts are provided by Cys-306, Cys-308, Cys-311, and His-337.

Belongs to the queuine tRNA-ribosyltransferase family. As to quaternary structure, homodimer. Within each dimer, one monomer is responsible for RNA recognition and catalysis, while the other monomer binds to the replacement base PreQ1. Zn(2+) is required as a cofactor.

It catalyses the reaction 7-aminomethyl-7-carbaguanine + guanosine(34) in tRNA = 7-aminomethyl-7-carbaguanosine(34) in tRNA + guanine. Its pathway is tRNA modification; tRNA-queuosine biosynthesis. Catalyzes the base-exchange of a guanine (G) residue with the queuine precursor 7-aminomethyl-7-deazaguanine (PreQ1) at position 34 (anticodon wobble position) in tRNAs with GU(N) anticodons (tRNA-Asp, -Asn, -His and -Tyr). Catalysis occurs through a double-displacement mechanism. The nucleophile active site attacks the C1' of nucleotide 34 to detach the guanine base from the RNA, forming a covalent enzyme-RNA intermediate. The proton acceptor active site deprotonates the incoming PreQ1, allowing a nucleophilic attack on the C1' of the ribose to form the product. After dissociation, two additional enzymatic reactions on the tRNA convert PreQ1 to queuine (Q), resulting in the hypermodified nucleoside queuosine (7-(((4,5-cis-dihydroxy-2-cyclopenten-1-yl)amino)methyl)-7-deazaguanosine). In Bacillus cereus (strain Q1), this protein is Queuine tRNA-ribosyltransferase.